We begin with the raw amino-acid sequence, 37 residues long: Large ribosomal subunit protein bL36 (37 aa).

This sequence belongs to the bacterial ribosomal protein bL36 family.

The chain is Large ribosomal subunit protein bL36 from Thermomicrobium roseum (strain ATCC 27502 / DSM 5159 / P-2).